The following is a 375-amino-acid chain: Succinyl-diaminopimelate desuccinylase (375 aa).

Zn(2+) is bound at residue His66. Asp68 is a catalytic residue. Asp99 lines the Zn(2+) pocket. Catalysis depends on Glu133, which acts as the Proton acceptor. 3 residues coordinate Zn(2+): Glu134, Glu162, and His348.

This sequence belongs to the peptidase M20A family. DapE subfamily. Homodimer. It depends on Zn(2+) as a cofactor. Co(2+) is required as a cofactor.

The catalysed reaction is N-succinyl-(2S,6S)-2,6-diaminopimelate + H2O = (2S,6S)-2,6-diaminopimelate + succinate. The protein operates within amino-acid biosynthesis; L-lysine biosynthesis via DAP pathway; LL-2,6-diaminopimelate from (S)-tetrahydrodipicolinate (succinylase route): step 3/3. Its function is as follows. Catalyzes the hydrolysis of N-succinyl-L,L-diaminopimelic acid (SDAP), forming succinate and LL-2,6-diaminopimelate (DAP), an intermediate involved in the bacterial biosynthesis of lysine and meso-diaminopimelic acid, an essential component of bacterial cell walls. The chain is Succinyl-diaminopimelate desuccinylase from Citrobacter koseri (strain ATCC BAA-895 / CDC 4225-83 / SGSC4696).